The following is a 324-amino-acid chain: Lactonase drp35 (324 aa).

Ca(2+) contacts are provided by E47, S109, G111, D129, T132, Y134, D137, N184, D235, and S236. The Proton donor role is filled by D235.

The protein belongs to the SMP-30/CGR1 family. It depends on Ca(2+) as a cofactor.

It is found in the cytoplasm. Exhibits lactonase activity. Acts in cells with perturbed membrane integrity and is possibly related to the membrane homeostasis. The polypeptide is Lactonase drp35 (drp35) (Staphylococcus aureus (strain MW2)).